The following is a 368-amino-acid chain: Phosphate acyltransferase (368 aa).

The interval 337-368 (LEQAARDASGAGQASPIAGQPAEPYAAQSSKA) is disordered.

This sequence belongs to the PlsX family. In terms of assembly, homodimer. Probably interacts with PlsY.

It localises to the cytoplasm. The enzyme catalyses a fatty acyl-[ACP] + phosphate = an acyl phosphate + holo-[ACP]. The protein operates within lipid metabolism; phospholipid metabolism. Its function is as follows. Catalyzes the reversible formation of acyl-phosphate (acyl-PO(4)) from acyl-[acyl-carrier-protein] (acyl-ACP). This enzyme utilizes acyl-ACP as fatty acyl donor, but not acyl-CoA. The chain is Phosphate acyltransferase from Paraburkholderia phytofirmans (strain DSM 17436 / LMG 22146 / PsJN) (Burkholderia phytofirmans).